We begin with the raw amino-acid sequence, 181 residues long: Oligoribonuclease (181 aa).

The region spanning 8 to 171 is the Exonuclease domain; that stretch reads LIWIDLEMTG…DDIRESVAEL (164 aa). Residue Tyr-129 is part of the active site.

The protein belongs to the oligoribonuclease family.

It localises to the cytoplasm. Functionally, 3'-to-5' exoribonuclease specific for small oligoribonucleotides. This is Oligoribonuclease from Yersinia enterocolitica serotype O:8 / biotype 1B (strain NCTC 13174 / 8081).